A 592-amino-acid chain; its full sequence is Transcription factor MYC3 (592 aa).

A JAZ-interaction domain region spans residues 82–141; the sequence is STGDNTVILGWGDGYYKGEEDKEKKKNNTNTAEQEHRKRVIRELNSLISGGIGVSDESND. Disordered stretches follow at residues 261-313, 341-361, 393-422, and 465-508; these read ENDP…VENQ, CGNE…NDEG, EPPE…AERQ, and QQAE…STAS. Over residues 278–293 the composition is skewed to low complexity; it reads SPARVNNGNNSNSNSK. Basic and acidic residues predominate over residues 294 to 306; it reads SDSHQISKLEKND. Positions 352–361 are enriched in polar residues; sequence VSKGSNNDEG. The segment covering 398 to 407 has biased composition (basic residues); it reads KPRKRGRKPA. Basic and acidic residues-rich tracts occupy residues 408–422 and 468–482; these read NGRE…AERQ and ESDK…DGMS. Residues 411 to 460 enclose the bHLH domain; the sequence is EEPLNHVEAERQRREKLNQRFYSLRAVVPNVSKMDKASLLGDAISYINEL.

As to quaternary structure, homo- and heterodimer. Interacts with MYB28, MYB29, MYB34, MYB51, MYB76, MYB122, MYC2, MYC4, AFPH2/NINJA and the JAZ repressors TIFY10A/JAZ1, TIFY10B/JAZ2, TIFY6B/JAZ3, TIFY11A/JAZ5, TIFY11B/JAZ6, TIFY5B/JAZ7, TIFY5A/JAZ8, TIFY7/JAZ9, TIFY9/JAZ10, TIFY3A/JAZ11 and TIFY3B/JAZ12. In terms of tissue distribution, constitutively expressed in roots, stems, leaves, flowers, and seedlings.

It is found in the nucleus. Transcription factor involved in tryptophan, jasmonic acid (JA) and other stress-responsive gene regulation. With MYC2 and MYC4, controls additively subsets of JA-dependent responses. Can form complexes with all known glucosinolate-related MYBs to regulate glucosinolate biosynthesis. Binds to the G-box (5'-CACGTG-3') of promoters. Activates multiple TIFY/JAZ promoters. This is Transcription factor MYC3 (MYC3) from Arabidopsis thaliana (Mouse-ear cress).